A 682-amino-acid chain; its full sequence is Putative protein RhsE (682 aa).

The span at 348–360 shows a compositional bias: basic and acidic residues; it reads ENGEREKAQRRSL. The tract at residues 348–372 is disordered; that stretch reads ENGEREKAQRRSLAETLQQEGSENG.

It belongs to the RHS family.

Functionally, rhs elements have a nonessential function. They may play an important role in the natural ecology of the cell. This Escherichia coli (strain K12) protein is Putative protein RhsE (rhsE).